The following is a 185-amino-acid chain: Ribonuclease M5 (185 aa).

The Toprim domain occupies Lys3–Gly84. Residues Glu9, Asp55, and Asp57 each contribute to the Mg(2+) site.

The protein belongs to the ribonuclease M5 family. Requires Mg(2+) as cofactor.

The protein localises to the cytoplasm. The catalysed reaction is Endonucleolytic cleavage of RNA, removing 21 and 42 nucleotides, respectively, from the 5'- and 3'-termini of a 5S-rRNA precursor.. Its function is as follows. Required for correct processing of both the 5' and 3' ends of 5S rRNA precursor. Cleaves both sides of a double-stranded region yielding mature 5S rRNA in one step. This Clostridium acetobutylicum (strain ATCC 824 / DSM 792 / JCM 1419 / IAM 19013 / LMG 5710 / NBRC 13948 / NRRL B-527 / VKM B-1787 / 2291 / W) protein is Ribonuclease M5.